Here is a 223-residue protein sequence, read N- to C-terminus: Uracil-DNA glycosylase (223 aa).

The Proton acceptor role is filled by Asp-61.

It belongs to the uracil-DNA glycosylase (UDG) superfamily. UNG family.

The protein localises to the cytoplasm. It catalyses the reaction Hydrolyzes single-stranded DNA or mismatched double-stranded DNA and polynucleotides, releasing free uracil.. Its function is as follows. Excises uracil residues from the DNA which can arise as a result of misincorporation of dUMP residues by DNA polymerase or due to deamination of cytosine. This chain is Uracil-DNA glycosylase, found in Haemophilus ducreyi (strain 35000HP / ATCC 700724).